Reading from the N-terminus, the 179-residue chain is Ribosome maturation factor RimM (179 aa).

The PRC barrel domain maps to 96–175 (KDEYFWFDIE…IITVIGAMDI (80 aa)).

Belongs to the RimM family. As to quaternary structure, binds ribosomal protein uS19.

The protein resides in the cytoplasm. An accessory protein needed during the final step in the assembly of 30S ribosomal subunit, possibly for assembly of the head region. Essential for efficient processing of 16S rRNA. May be needed both before and after RbfA during the maturation of 16S rRNA. It has affinity for free ribosomal 30S subunits but not for 70S ribosomes. This Sulfurimonas denitrificans (strain ATCC 33889 / DSM 1251) (Thiomicrospira denitrificans (strain ATCC 33889 / DSM 1251)) protein is Ribosome maturation factor RimM.